A 393-amino-acid polypeptide reads, in one-letter code: Cytochrome b (393 aa).

4 consecutive transmembrane segments (helical) span residues 32–52 (FGSLLAFCLVIQIITGVTLAM), 76–98 (WLIRYLHANTASAFFFIVYLHMG), 113–133 (VWTLGVIIFILMIVTAFLGYV), and 179–199 (FFALHFVLPFVLAALALMHLI). 2 residues coordinate heme b: H82 and H96. Heme b-binding residues include H183 and H197. H202 is a binding site for a ubiquinone. Helical transmembrane passes span 226–246 (FIFKDLITIFLFILGLSIFVF), 290–310 (LLGVIAMFAAIVILLVMPFTD), 322–342 (LSKIAYYFFIANFLILMKLGA), and 349–369 (FIEFGQISTVLYFSHFVIIVP).

This sequence belongs to the cytochrome b family. Fungal cytochrome b-c1 complex contains 10 subunits; 3 respiratory subunits, 2 core proteins and 5 low-molecular weight proteins. Cytochrome b-c1 complex is a homodimer. Heme b serves as cofactor.

Its subcellular location is the mitochondrion inner membrane. Its function is as follows. Component of the ubiquinol-cytochrome c reductase complex (complex III or cytochrome b-c1 complex) that is part of the mitochondrial respiratory chain. The b-c1 complex mediates electron transfer from ubiquinol to cytochrome c. Contributes to the generation of a proton gradient across the mitochondrial membrane that is then used for ATP synthesis. This Venturia inaequalis (Apple scab fungus) protein is Cytochrome b (COB).